Consider the following 122-residue polypeptide: Large ribosomal subunit protein bL20 (122 aa).

It belongs to the bacterial ribosomal protein bL20 family.

Binds directly to 23S ribosomal RNA and is necessary for the in vitro assembly process of the 50S ribosomal subunit. It is not involved in the protein synthesizing functions of that subunit. The protein is Large ribosomal subunit protein bL20 of Saccharopolyspora erythraea (strain ATCC 11635 / DSM 40517 / JCM 4748 / NBRC 13426 / NCIMB 8594 / NRRL 2338).